The chain runs to 570 residues: Periplasmic trehalase (570 aa).

Positions 1–34 are cleaved as a signal peptide; it reads MIPPEIRRSVLLQKAIKLALAGTLLTFASFSATA. Substrate contacts are provided by residues Arg-159, 166–167, Asn-203, 212–214, 284–286, and Gly-317; these read WD, HSQ, and RPE. Residues Asp-319 and Glu-503 each act as proton donor/acceptor in the active site. Residue Glu-518 participates in substrate binding. The disordered stretch occupies residues 544-570; the sequence is KPCDSVPSTRPASLSATPTKTPSAATQ. Over residues 554 to 570 the composition is skewed to low complexity; that stretch reads PASLSATPTKTPSAATQ.

The protein belongs to the glycosyl hydrolase 37 family. Monomer.

Its subcellular location is the periplasm. It catalyses the reaction alpha,alpha-trehalose + H2O = alpha-D-glucose + beta-D-glucose. Functionally, provides the cells with the ability to utilize trehalose at high osmolarity by splitting it into glucose molecules that can subsequently be taken up by the phosphotransferase-mediated uptake system. The chain is Periplasmic trehalase from Salmonella paratyphi C (strain RKS4594).